We begin with the raw amino-acid sequence, 104 residues long: DNA-directed RNA polymerase subunit omega (104 aa).

The tract at residues 76–104 (IEEEKRRKEEEEKKIKEQIAKEKEDGEKI) is disordered.

The protein belongs to the RNA polymerase subunit omega family. The RNAP catalytic core consists of 2 alpha, 1 beta, 1 beta' and 1 omega subunit. When a sigma factor is associated with the core the holoenzyme is formed, which can initiate transcription.

The catalysed reaction is RNA(n) + a ribonucleoside 5'-triphosphate = RNA(n+1) + diphosphate. Functionally, promotes RNA polymerase assembly. Latches the N- and C-terminal regions of the beta' subunit thereby facilitating its interaction with the beta and alpha subunits. This is DNA-directed RNA polymerase subunit omega from Streptococcus pneumoniae (strain CGSP14).